We begin with the raw amino-acid sequence, 198 residues long: HTH-type transcriptional regulator BetI (198 aa).

The HTH tetR-type domain occupies 8–68; the sequence is PLRRRELIDA…ATMRHLLREL (61 aa). Positions 31 to 50 form a DNA-binding region, H-T-H motif; sequence TVAQIAHEAGVSPALAHHYF.

It participates in amine and polyamine biosynthesis; betaine biosynthesis via choline pathway [regulation]. Its function is as follows. Repressor involved in the biosynthesis of the osmoprotectant glycine betaine. It represses transcription of the choline transporter BetT and the genes of BetAB involved in the synthesis of glycine betaine. The sequence is that of HTH-type transcriptional regulator BetI from Brucella melitensis biotype 2 (strain ATCC 23457).